The chain runs to 571 residues: Septation ring formation regulator EzrA (571 aa).

The Extracellular segment spans residues 1–3 (MYY). Residues 4-22 (MLIGFIIVVIAVIGAGYIL) form a helical membrane-spanning segment. At 23 to 571 (KRKHYQRINE…ESKVSVDDIE (549 aa)) the chain is on the cytoplasmic side. 4 coiled-coil regions span residues 248-298 (LAQM…DTLE), 326-374 (DALA…ASGE), 400-437 (KFAE…ERER), and 478-529 (RIAE…ENHF).

This sequence belongs to the EzrA family.

The protein resides in the cell membrane. Negative regulator of FtsZ ring formation; modulates the frequency and position of FtsZ ring formation. Inhibits FtsZ ring formation at polar sites. Interacts either with FtsZ or with one of its binding partners to promote depolymerization. This Listeria monocytogenes serotype 4b (strain CLIP80459) protein is Septation ring formation regulator EzrA.